The following is a 249-amino-acid chain: Small ribosomal subunit protein uS4m (249 aa).

The 61-residue stretch at Arg-133–Gln-193 folds into the S4 RNA-binding domain.

Belongs to the universal ribosomal protein uS4 family.

Its subcellular location is the mitochondrion. The sequence is that of Small ribosomal subunit protein uS4m (RPS4) from Reclinomonas americana.